The sequence spans 118 residues: Large ribosomal subunit protein bL20 (118 aa).

It belongs to the bacterial ribosomal protein bL20 family.

Its function is as follows. Binds directly to 23S ribosomal RNA and is necessary for the in vitro assembly process of the 50S ribosomal subunit. It is not involved in the protein synthesizing functions of that subunit. This chain is Large ribosomal subunit protein bL20, found in Erwinia tasmaniensis (strain DSM 17950 / CFBP 7177 / CIP 109463 / NCPPB 4357 / Et1/99).